The sequence spans 291 residues: UPF0276 protein VV1_0952 (291 aa).

Belongs to the UPF0276 family.

The polypeptide is UPF0276 protein VV1_0952 (Vibrio vulnificus (strain CMCP6)).